Reading from the N-terminus, the 440-residue chain is Xylose isomerase (440 aa).

Mg(2+) is bound by residues Asp-307 and Asp-309.

It belongs to the xylose isomerase family. Homotetramer. Requires Mg(2+) as cofactor.

Its subcellular location is the cytoplasm. It carries out the reaction alpha-D-xylose = alpha-D-xylulofuranose. The protein is Xylose isomerase of Escherichia coli (strain K12 / MC4100 / BW2952).